The sequence spans 229 residues: PKHD-type hydroxylase BRADO6316 (229 aa).

Residues 78 to 180 (QIFPPLFNRY…RVASFFWLQS (103 aa)) enclose the Fe2OG dioxygenase domain. The Fe cation site is built by His98, Asp100, and His161. Residue Arg171 coordinates 2-oxoglutarate.

Fe(2+) serves as cofactor. Requires L-ascorbate as cofactor.

The chain is PKHD-type hydroxylase BRADO6316 from Bradyrhizobium sp. (strain ORS 278).